The following is a 1409-amino-acid chain: DNA-directed RNA polymerase subunit beta' (1409 aa).

Zn(2+) is bound by residues C70, C72, C85, and C88. D460, D462, and D464 together coordinate Mg(2+). Residues C814, C888, C895, and C898 each contribute to the Zn(2+) site.

It belongs to the RNA polymerase beta' chain family. In terms of assembly, the RNAP catalytic core consists of 2 alpha, 1 beta, 1 beta' and 1 omega subunit. When a sigma factor is associated with the core the holoenzyme is formed, which can initiate transcription. It depends on Mg(2+) as a cofactor. Zn(2+) is required as a cofactor.

It carries out the reaction RNA(n) + a ribonucleoside 5'-triphosphate = RNA(n+1) + diphosphate. In terms of biological role, DNA-dependent RNA polymerase catalyzes the transcription of DNA into RNA using the four ribonucleoside triphosphates as substrates. The chain is DNA-directed RNA polymerase subunit beta' from Shewanella violacea.